Here is a 1098-residue protein sequence, read N- to C-terminus: Beta-alanine-activating enzyme (1098 aa).

Residues 198-206 (TSGTTGIPK), D428, R442, and K527 contribute to the ATP site. Positions 553–630 (EDLWEKLQYL…EIYNHILQTV (78 aa)) constitute a Carrier domain. S589 carries the O-(pantetheine 4'-phosphoryl)serine modification. A phosphoserine mark is found at S649 and S724.

Belongs to the ATP-dependent AMP-binding enzyme family. As to expression, ubiquitously expressed in adult tissues.

Functionally, covalently binds beta-alanine in an ATP-dependent manner to form a thioester bond with its phosphopantetheine group and transfers it to an, as yet, unknown acceptor. May be required for a post-translational protein modification or for post-transcriptional modification of an RNA. In Homo sapiens (Human), this protein is Beta-alanine-activating enzyme (AASDH).